The sequence spans 702 residues: Cytolytic toxin-alpha (702 aa).

Residues 2–265 (SSDIIMAGLG…KADLLVRDIS (264 aa)) form a structural MACPF/CDC pore-forming domain region. N-linked (GlcNAc...) asparagine glycosylation is found at Asn93, Asn100, Asn201, Asn287, and Asn311. Residues 266-385 (QGLVRKVHSI…DIIEETKHKA (120 aa)) are structural FAT domain. The thioredoxin (THX) domain stretch occupies residues 386-513 (VLSQSQMVKD…PIISAVEKIV (128 aa)). Positions 505–702 (IISAVEKIVD…RPYHGTVRLL (198 aa)) constitute a B30.2/SPRY domain. Asn530 carries N-linked (GlcNAc...) asparagine glycosylation.

The protein belongs to the SNTX/VTX toxin family. Heterodimer of alpha and beta subunits; non-covalently linked. Also associates into tetramers or even higher aggregates. In terms of processing, intrachain disulfide bonds may be present in the heterodimer. Expressed by the venom gland.

The protein localises to the secreted. This heterodimer induces potent hemolytic activities (when tested on rabbit erythrocytes, EC(50)=25-56 ng/mL) due to its ability to form pores in the cell membrane. The pore may be composed of 10 alpha/beta heterodimers. The toxin shows cardiovascular effects that include a vasorelaxant action that may involve the L-arginine-nitric oxid synthase pathway. In addition, it displays edema-inducing activities, increases vascular permeability. It also shows myotoxic activities and interferes irreversibly with neuromuscular function. It also induces irreversible platelet aggregation in rabbit or rat (but not in human or mouse) whole blood. In addition, it has been observed to increase spontaneous quantal acetylcholine release from isolated frog cutaneous pectoris motor endings. The polypeptide is Cytolytic toxin-alpha (Scorpaena plumieri (Spotted scorpionfish)).